Here is a 261-residue protein sequence, read N- to C-terminus: Kallikrein 1-related peptidase b16 (261 aa).

The first 18 residues, 1–18 (MWFLILFLALSLGGIDAA), serve as a signal peptide directing secretion. Positions 19–24 (PPVQSR) are cleaved as a propeptide — activation peptide. A Peptidase S1 domain is found at 25-258 (IVGGFKCEKN…FNSWIKDTMM (234 aa)). 5 disulfides stabilise this stretch: Cys31–Cys173, Cys50–Cys66, Cys152–Cys219, Cys184–Cys198, and Cys209–Cys234. Residue His65 is the Charge relay system of the active site. N-linked (GlcNAc...) asparagine glycosylation is present at Asn102. The active-site Charge relay system is Asp120. Ser213 (charge relay system) is an active-site residue.

This sequence belongs to the peptidase S1 family. Kallikrein subfamily.

The catalysed reaction is Cleavage of the Leu-|-Leu bond in synthetic tetradecapeptide renin substrate, to produce angiotensin I, but not active on natural angiotensinogen. Also hydrolyzes Bz-Arg-p-nitroanilide.. The sequence is that of Kallikrein 1-related peptidase b16 (Klk1b16) from Mus musculus (Mouse).